The chain runs to 139 residues: Histone H2AX (139 aa).

2 disordered regions span residues 1–21 (MSGR…RSSR) and 119–139 (KKSS…SQEY). S2 carries the N-acetylserine modification. S2 bears the Phosphoserine mark. The span at 7-19 (AVSKTRAKAKTRS) shows a compositional bias: basic residues. K10 bears the N6-lactoyllysine; alternate mark. Residues K14, K16, and K120 each participate in a glycyl lysine isopeptide (Lys-Gly) (interchain with G-Cter in ubiquitin) cross-link. At S136 the chain carries Phosphoserine. A [ST]-Q motif motif is present at residues 136-137 (SQ). Y139 carries the phosphotyrosine; by WSTF modification.

This sequence belongs to the histone H2A family. The nucleosome is a histone octamer containing two molecules each of H2A, H2B, H3 and H4 assembled in one H3-H4 heterotetramer and two H2A-H2B heterodimers. The octamer wraps approximately 147 bp of DNA. Interacts with numerous proteins required for DNA damage signaling and repair when phosphorylated on Ser-136. Post-translationally, phosphorylated. Phosphorylation of Ser-136 (H2AX139ph) occurs in response to DNA double strand breaks (DSBs) generated by exogenous genotoxic agents, by stalled replication forks and by meiotic recombination events. Phosphorylation is dependent on the DNA damage checkpoint kinases ATR and ATM, spreads on either side of a detected DSB site and may mark the surrounding chromatin for recruitment of proteins required for DNA damage signaling and repair. Widespread phosphorylation may also serve to amplify the damage signal or aid repair of persistent lesions. Dephosphorylation of Ser-136 is required for DNA DSB repair. Phosphorylation at Tyr-139 (H2AXY142ph) by baz1b/wstf determines the relative recruitment of either DNA repair or pro-apoptotic factors. Phosphorylation at Tyr-139 (H2AXY142ph) favors the recruitment of pro-apoptosis factors. In contrast, dephosphorylation of Tyr-139 by EYA proteins (eya1, eya2, eya3 or eya4) favors the recruitment of MDC1-containing DNA repair complexes to the tail of phosphorylated Ser-136 (H2AX139ph). Phosphorylated by VRK1. In terms of processing, monoubiquitination of Lys-120 (H2AXK119ub) by ring1 and rnf2/ring2 complex gives a specific tag for epigenetic transcriptional repression. Following DNA double-strand breaks (DSBs), it is ubiquitinated through 'Lys-63' linkage of ubiquitin moieties by the E2 ligase ube2n and the E3 ligases rnf8 and rnf168, leading to the recruitment of repair proteins to sites of DNA damage. Ubiquitination at Lys-14 and Lys-16 (H2AK13Ub and H2AK15Ub, respectively) in response to DNA damage is initiated by rnf168 that mediates monoubiquitination at these 2 sites, and 'Lys-63'-linked ubiquitin are then conjugated to monoubiquitin; rnf8 is able to extend 'Lys-63'-linked ubiquitin chains in vitro. H2AK119Ub and ionizing radiation-induced 'Lys-63'-linked ubiquitination (H2AK13Ub and H2AK15Ub) are distinct events.

The protein resides in the nucleus. It localises to the chromosome. In terms of biological role, variant histone H2A which replaces conventional H2A in a subset of nucleosomes. Nucleosomes wrap and compact DNA into chromatin, limiting DNA accessibility to the cellular machineries which require DNA as a template. Histones thereby play a central role in transcription regulation, DNA repair, DNA replication and chromosomal stability. DNA accessibility is regulated via a complex set of post-translational modifications of histones, also called histone code, and nucleosome remodeling. Required for checkpoint-mediated arrest of cell cycle progression in response to low doses of ionizing radiation and for efficient repair of DNA double strand breaks (DSBs) specifically when modified by C-terminal phosphorylation. The polypeptide is Histone H2AX (h2ax) (Xenopus laevis (African clawed frog)).